The sequence spans 1040 residues: Multidrug resistance protein MdtB (1040 aa).

Transmembrane regions (helical) follow at residues 16–36, 347–367, 369–389, 396–416, 440–460, 472–492, 537–557, 863–883, 888–908, 911–931, 968–988, and 998–1018; these read FIMRPVATTLLMVAILLAGII, LMMAIALVVMIIYLFLRNIPA, IIPGVAVPLSLIGTFAVMVFL, LTLMALTIATGFVVDDAIVVI, IGFTIISLTFSLIAVLIPLLF, FAITLAVAILISAVVSLTLTP, WLTLSVALSTLLLSVLLWVFI, LGSTVWLIVAAVVAMYIVLGI, FIHPITILSTLPTAGVGALLA, IAGSELDVIAIIGIILLIGIV, ILMTTLAALLGALPLMLSTGV, and IGMVGGLIVSQVLTLFTTPVI.

This sequence belongs to the resistance-nodulation-cell division (RND) (TC 2.A.6) family. MdtB subfamily. In terms of assembly, part of a tripartite efflux system composed of MdtA, MdtB and MdtC. MdtB forms a heteromultimer with MdtC.

It is found in the cell inner membrane. Its function is as follows. The MdtABC tripartite complex confers resistance against novobiocin and deoxycholate. In Escherichia coli O81 (strain ED1a), this protein is Multidrug resistance protein MdtB.